The sequence spans 301 residues: 2-methoxy-6-polyprenyl-1,4-benzoquinol methylase, mitochondrial (301 aa).

A mitochondrion-targeting transit peptide spans 1 to 16; it reads MQTTRSTRLLSLARRF. The segment covering 20 to 31 has biased composition (polar residues); that stretch reads RTASQSAQNSKG. Residues 20–44 are disordered; sequence RTASQSAQNSKGMASGAESISGKEK. S-adenosyl-L-methionine is bound by residues Thr-111, Asp-139, and 173–174; that span reads DA.

This sequence belongs to the class I-like SAM-binding methyltransferase superfamily. MenG/UbiE family. In terms of assembly, component of a multi-subunit COQ enzyme complex.

The protein localises to the mitochondrion inner membrane. It carries out the reaction a 2-methoxy-6-(all-trans-polyprenyl)benzene-1,4-diol + S-adenosyl-L-methionine = a 5-methoxy-2-methyl-3-(all-trans-polyprenyl)benzene-1,4-diol + S-adenosyl-L-homocysteine + H(+). It participates in cofactor biosynthesis; ubiquinone biosynthesis. Functionally, methyltransferase required for the conversion of 2-polyprenyl-6-methoxy-1,4-benzoquinol (DDMQH2) to 2-polyprenyl-3-methyl-6-methoxy-1,4-benzoquinol (DMQH2). The sequence is that of 2-methoxy-6-polyprenyl-1,4-benzoquinol methylase, mitochondrial from Drosophila melanogaster (Fruit fly).